The following is a 579-amino-acid chain: Nuclear hormone receptor family member nhr-71 (579 aa).

The segment at residues 8-83 is a DNA-binding region (nuclear receptor); it reads SQECMVCSAP…AGMKIGAVQP (76 aa). 2 NR C4-type zinc fingers span residues 11-31 and 47-71; these read CMVCSAPADGLHYGAISCRSC and CKHTNTCLIDPDGRCACRSCRFTKC. Disordered stretches follow at residues 82-124 and 168-189; these read QPRR…SDGP and EPIPSTSSAPEKQSCQSSPNDD. Polar residues-rich tracts occupy residues 106–124 and 171–186; these read SMNNSPLERNGNSFSSDGP and PSTSSAPEKQSCQSSP. The region spanning 189 to 452 is the NR LBD domain; that stretch reads DEQQEFNHLV…KFWYETLCYA (264 aa).

It belongs to the nuclear hormone receptor family.

The protein localises to the nucleus. Functionally, orphan nuclear receptor. This chain is Nuclear hormone receptor family member nhr-71 (nhr-71), found in Caenorhabditis elegans.